A 467-amino-acid chain; its full sequence is ATP synthase subunit beta (467 aa).

Position 156 to 163 (156 to 163) interacts with ATP; the sequence is GGAGVGKT.

It belongs to the ATPase alpha/beta chains family. As to quaternary structure, F-type ATPases have 2 components, CF(1) - the catalytic core - and CF(0) - the membrane proton channel. CF(1) has five subunits: alpha(3), beta(3), gamma(1), delta(1), epsilon(1). CF(0) has three main subunits: a(1), b(2) and c(9-12). The alpha and beta chains form an alternating ring which encloses part of the gamma chain. CF(1) is attached to CF(0) by a central stalk formed by the gamma and epsilon chains, while a peripheral stalk is formed by the delta and b chains.

The protein resides in the cell inner membrane. The catalysed reaction is ATP + H2O + 4 H(+)(in) = ADP + phosphate + 5 H(+)(out). Produces ATP from ADP in the presence of a proton gradient across the membrane. The catalytic sites are hosted primarily by the beta subunits. The polypeptide is ATP synthase subunit beta (Ralstonia nicotianae (strain ATCC BAA-1114 / GMI1000) (Ralstonia solanacearum)).